The chain runs to 261 residues: Cytochrome c oxidase subunit 3 (261 aa).

The Mitochondrial matrix segment spans residues 1–15 (MTHQTHAYHMVNPSP). A helical membrane pass occupies residues 16–34 (WPLTGALSALLMTSGLIMW). Residues 35–40 (FHFNST) are Mitochondrial intermembrane-facing. The chain crosses the membrane as a helical span at residues 41–66 (TLLMLGLTTNMLTMYQWWRDVVREST). Residues 67–72 (FQGHHT) are Mitochondrial matrix-facing. A helical transmembrane segment spans residues 73–105 (PNVQKGLRYGMILFIISEVLFFTGFFWAFYHSS). Topologically, residues 106–128 (LAPTPELGGCWPPTGIHPLNPLE) are mitochondrial intermembrane. Residues 129-152 (VPLLNTSVLLASGVSITWAHHSLM) traverse the membrane as a helical segment. Residues 153-155 (EGN) are Mitochondrial matrix-facing. A helical transmembrane segment spans residues 156–183 (RNHMLQALFITIALGVYFTLLQASEYYE). The Mitochondrial intermembrane segment spans residues 184 to 190 (APFTISD). The helical transmembrane segment at 191–223 (GVYGSTFFVATGFHGLHVIIGSTFLIVCFFRQL) threads the bilayer. Residues 224-232 (KFHFTSNHH) lie on the Mitochondrial matrix side of the membrane. A helical transmembrane segment spans residues 233–256 (FGFEAAAWYWHFVDVVWLFLYVSI). Residues 257–261 (YWWGS) are Mitochondrial intermembrane-facing.

Belongs to the cytochrome c oxidase subunit 3 family. As to quaternary structure, component of the cytochrome c oxidase (complex IV, CIV), a multisubunit enzyme composed of 14 subunits. The complex is composed of a catalytic core of 3 subunits MT-CO1, MT-CO2 and MT-CO3, encoded in the mitochondrial DNA, and 11 supernumerary subunits COX4I, COX5A, COX5B, COX6A, COX6B, COX6C, COX7A, COX7B, COX7C, COX8 and NDUFA4, which are encoded in the nuclear genome. The complex exists as a monomer or a dimer and forms supercomplexes (SCs) in the inner mitochondrial membrane with NADH-ubiquinone oxidoreductase (complex I, CI) and ubiquinol-cytochrome c oxidoreductase (cytochrome b-c1 complex, complex III, CIII), resulting in different assemblies (supercomplex SCI(1)III(2)IV(1) and megacomplex MCI(2)III(2)IV(2)).

It localises to the mitochondrion inner membrane. The catalysed reaction is 4 Fe(II)-[cytochrome c] + O2 + 8 H(+)(in) = 4 Fe(III)-[cytochrome c] + 2 H2O + 4 H(+)(out). Its function is as follows. Component of the cytochrome c oxidase, the last enzyme in the mitochondrial electron transport chain which drives oxidative phosphorylation. The respiratory chain contains 3 multisubunit complexes succinate dehydrogenase (complex II, CII), ubiquinol-cytochrome c oxidoreductase (cytochrome b-c1 complex, complex III, CIII) and cytochrome c oxidase (complex IV, CIV), that cooperate to transfer electrons derived from NADH and succinate to molecular oxygen, creating an electrochemical gradient over the inner membrane that drives transmembrane transport and the ATP synthase. Cytochrome c oxidase is the component of the respiratory chain that catalyzes the reduction of oxygen to water. Electrons originating from reduced cytochrome c in the intermembrane space (IMS) are transferred via the dinuclear copper A center (CU(A)) of subunit 2 and heme A of subunit 1 to the active site in subunit 1, a binuclear center (BNC) formed by heme A3 and copper B (CU(B)). The BNC reduces molecular oxygen to 2 water molecules using 4 electrons from cytochrome c in the IMS and 4 protons from the mitochondrial matrix. This is Cytochrome c oxidase subunit 3 (MT-CO3) from Gazella cuvieri (Cuvier's gazelle).